A 273-amino-acid chain; its full sequence is Large ribosomal subunit protein uL2cy (273 aa).

Disordered stretches follow at residues 1–22 and 224–273; these read MAIH…DSQV and NPVD…RRRK.

This sequence belongs to the universal ribosomal protein uL2 family. As to quaternary structure, part of the 50S ribosomal subunit.

The protein resides in the plastid. It localises to the chloroplast. This is Large ribosomal subunit protein uL2cy (rpl2-B) from Chloranthus spicatus (Chulantree).